We begin with the raw amino-acid sequence, 151 residues long: Chaperonin GroEL (151 aa).

Residue 41–45 (DGTTT) coordinates ATP.

The protein belongs to the chaperonin (HSP60) family. As to quaternary structure, forms a cylinder of 14 subunits composed of two heptameric rings stacked back-to-back. Interacts with the co-chaperonin GroES.

It is found in the cytoplasm. It catalyses the reaction ATP + H2O + a folded polypeptide = ADP + phosphate + an unfolded polypeptide.. Functionally, together with its co-chaperonin GroES, plays an essential role in assisting protein folding. The GroEL-GroES system forms a nano-cage that allows encapsulation of the non-native substrate proteins and provides a physical environment optimized to promote and accelerate protein folding. The protein is Chaperonin GroEL of Mycobacteroides chelonae (Mycobacterium chelonae).